Here is a 120-residue protein sequence, read N- to C-terminus: MASPKETLQRRAARVRRQVKAVANGRPRLSVHRSSKNIYAQIIDDVRGVTLAAASTLDGDLKGKLKTGADSAAAAAVGKLVAERAVKAGVKDVVFDRSAFIYHGRVKALAEAAREGGLSF.

This sequence belongs to the universal ribosomal protein uL18 family. In terms of assembly, part of the 50S ribosomal subunit; part of the 5S rRNA/L5/L18/L25 subcomplex. Contacts the 5S and 23S rRNAs.

This is one of the proteins that bind and probably mediate the attachment of the 5S RNA into the large ribosomal subunit, where it forms part of the central protuberance. This chain is Large ribosomal subunit protein uL18, found in Brucella suis biovar 1 (strain 1330).